Reading from the N-terminus, the 130-residue chain is Capsid protein (130 aa).

The viral RNA-binding stretch occupies residues E31–I104.

This sequence belongs to the Leviviricetes capsid protein family. Homodimer. The capsid proteins form dimers that assemble by group of 5. Twelve such pentamers are linked together with free dimers. The homodimers binds to the viral RNA via an operator hairpin, but also to many other RNA sequences in the viral genome; this interaction probably shifts the virus from the replicative to the assembly phase and ensures specific encapsidation of the viral genome.

The protein resides in the virion. Its function is as follows. Capsid protein self-assembles to form an icosahedral capsid with a T=3 symmetry, about 26 nm in diameter, and consisting of 89 capsid proteins dimers (178 capsid proteins). Involved in viral genome encapsidation through the interaction between a capsid protein dimer and the multiple packaging signals present in the RNA genome. The capsid also contains 1 copy of the A2 maturation protein. Acts as a translational repressor of viral replicase synthesis late in infection. This latter function is the result of capsid protein interaction with an RNA hairpin which contains the replicase ribosome-binding site. The polypeptide is Capsid protein (Escherichia coli (Bacteriophage GA)).